The chain runs to 384 residues: D-galactosamine-6-phosphate deaminase AgaS (384 aa).

SIS domains are found at residues 45–197 and 215–364; these read LEPL…SQTF and SEGV…PDTP.

This sequence belongs to the SIS family. AgaS subfamily.

The enzyme catalyses D-galactosamine 6-phosphate + H2O = D-tagatopyranose 1-phosphate + NH4(+). Catalyzes the isomerization-deamination of galactosamine 6-phosphate to form tagatofuranose 6-phosphate and ammonium ion. In Escherichia coli O157:H7, this protein is D-galactosamine-6-phosphate deaminase AgaS.